Here is a 550-residue protein sequence, read N- to C-terminus: Carboxylesterase 4A (550 aa).

The N-terminal stretch at 1–20 (MNWILCLSLTLLLVVQTAWG) is a signal peptide. Cysteines 88 and 116 form a disulfide. The active-site Acyl-ester intermediate is the Ser-221. Cys-273 and Cys-284 form a disulfide bridge. Asn-276 carries an N-linked (GlcNAc...) asparagine glycan. Catalysis depends on Glu-353, which acts as the Charge relay system. A glycan (N-linked (GlcNAc...) asparagine) is linked at Asn-386. His-465 acts as the Charge relay system in catalysis.

This sequence belongs to the type-B carboxylesterase/lipase family.

It localises to the secreted. Functionally, probable carboxylesterase. This is Carboxylesterase 4A (CES4A) from Bos taurus (Bovine).